The following is a 73-amino-acid chain: Protein SlyX homolog (73 aa).

The protein belongs to the SlyX family.

The polypeptide is Protein SlyX homolog (Haemophilus ducreyi (strain 35000HP / ATCC 700724)).